Reading from the N-terminus, the 60-residue chain is UI (60 aa).

Over residues 1-14 the composition is skewed to low complexity; the sequence is AAAAGDSAASDLLG. The segment at 1 to 22 is disordered; that stretch reads AAAAGDSAASDLLGDNILRSED. Val60 carries the post-translational modification Valine amide.

Belongs to the sauvagine/corticotropin-releasing factor/urotensin I family.

The protein localises to the secreted. Urotensin is found in the teleost caudal neurosecretory system. It has a suggested role in osmoregulation and as a corticotropin-releasing factor. The non-hormonal portion of this precursor may be a urotensin binding protein, urophysin. The polypeptide is UI (Platichthys flesus (European flounder)).